We begin with the raw amino-acid sequence, 549 residues long: Cytoplasmic trehalase (549 aa).

Residues R168, 175–176 (WD), N212, 221–223 (RSQ), 292–294 (RDE), and G324 contribute to the substrate site. Residues D326 and E509 each act as proton donor/acceptor in the active site. E525 lines the substrate pocket.

It belongs to the glycosyl hydrolase 37 family. As to quaternary structure, monomer.

The protein localises to the cytoplasm. The enzyme catalyses alpha,alpha-trehalose + H2O = alpha-D-glucose + beta-D-glucose. The protein operates within glycan degradation; trehalose degradation; D-glucose from alpha,alpha-trehalose: step 1/1. Its function is as follows. Hydrolyzes trehalose to glucose. Could be involved, in cells returning to low osmolarity conditions, in the utilization of the accumulated cytoplasmic trehalose, which was synthesized in response to high osmolarity. In Salmonella choleraesuis (strain SC-B67), this protein is Cytoplasmic trehalase.